A 258-amino-acid polypeptide reads, in one-letter code: 4-hydroxy-tetrahydrodipicolinate reductase (258 aa).

10-15 contacts NAD(+); it reads GCLGRM. Residue Lys38 participates in NADP(+) binding. Residues 89–91 and 113–116 each bind NAD(+); these read GTT and AGNM. His146 functions as the Proton donor/acceptor in the catalytic mechanism. His147 is a binding site for (S)-2,3,4,5-tetrahydrodipicolinate. Lys150 (proton donor) is an active-site residue. (S)-2,3,4,5-tetrahydrodipicolinate is bound at residue 156-157; the sequence is GT.

The protein belongs to the DapB family.

It localises to the cytoplasm. The enzyme catalyses (S)-2,3,4,5-tetrahydrodipicolinate + NAD(+) + H2O = (2S,4S)-4-hydroxy-2,3,4,5-tetrahydrodipicolinate + NADH + H(+). It catalyses the reaction (S)-2,3,4,5-tetrahydrodipicolinate + NADP(+) + H2O = (2S,4S)-4-hydroxy-2,3,4,5-tetrahydrodipicolinate + NADPH + H(+). The protein operates within amino-acid biosynthesis; L-lysine biosynthesis via DAP pathway; (S)-tetrahydrodipicolinate from L-aspartate: step 4/4. Catalyzes the conversion of 4-hydroxy-tetrahydrodipicolinate (HTPA) to tetrahydrodipicolinate. This Pelagibacter ubique (strain HTCC1062) protein is 4-hydroxy-tetrahydrodipicolinate reductase.